A 216-amino-acid polypeptide reads, in one-letter code: Large ribosomal subunit protein uL24m (216 aa).

A mitochondrion-targeting transit peptide spans 1-9; sequence MRLSALLAL. Ser24 carries the phosphoserine modification. Residues 56-89 enclose the KOW domain; sequence LFCGDMVEILEGKDAGKQGKVVQVVRQRNWVVLE.

This sequence belongs to the universal ribosomal protein uL24 family. Component of the mitochondrial ribosome large subunit (39S) which comprises a 16S rRNA and about 50 distinct proteins.

It is found in the mitochondrion. This chain is Large ribosomal subunit protein uL24m (Mrpl24), found in Mus musculus (Mouse).